The sequence spans 130 residues: Glycine cleavage system H protein (130 aa).

The Lipoyl-binding domain occupies 24-106 (TVTIGITDHA…YDDGWFFKVK (83 aa)). Residue K65 is modified to N6-lipoyllysine.

This sequence belongs to the GcvH family. In terms of assembly, the glycine cleavage system is composed of four proteins: P, T, L and H. (R)-lipoate serves as cofactor.

The glycine cleavage system catalyzes the degradation of glycine. The H protein shuttles the methylamine group of glycine from the P protein to the T protein. This is Glycine cleavage system H protein from Saccharophagus degradans (strain 2-40 / ATCC 43961 / DSM 17024).